We begin with the raw amino-acid sequence, 552 residues long: Steroid transmembrane transporter SLC22A24 (552 aa).

Helical transmembrane passes span 16–36 (FQIL…THIL), 144–164 (LKSV…LMFG), 175–197 (IYTW…PTFV), 201–220 (IFRF…AFIL), 232–252 (IGIT…GGLA), 255–275 (IRDW…LSLL), 349–369 (IICF…GLIL), 371–391 (LQDL…ITFI), 407–427 (INQS…TFLS), 435–455 (VVLA…FFVH), 474–494 (VFSR…VYSP), and 496–516 (LPWV…FCLP).

This sequence belongs to the major facilitator (TC 2.A.1) superfamily. Organic cation transporter (TC 2.A.1.19) family.

The protein localises to the cell membrane. It carries out the reaction estrone 3-sulfate(out) + glutarate(in) = estrone 3-sulfate(in) + glutarate(out). It catalyses the reaction 17beta-estradiol 17-O-(beta-D-glucuronate)(out) + glutarate(in) = 17beta-estradiol 17-O-(beta-D-glucuronate)(in) + glutarate(out). The catalysed reaction is taurocholate(out) + glutarate(in) = taurocholate(in) + glutarate(out). The enzyme catalyses 5alpha-androstane-3alpha,17beta-diol 3-O-(beta-D-glucuronate)(out) + glutarate(in) = 5alpha-androstane-3alpha,17beta-diol 3-O-(beta-D-glucuronate)(in) + glutarate(out). It carries out the reaction glycocholate(out) + glutarate(in) = glycocholate(in) + glutarate(out). It catalyses the reaction dehydroepiandrosterone 3-sulfate(out) + glutarate(in) = dehydroepiandrosterone 3-sulfate(in) + glutarate(out). The catalysed reaction is glutarate(in) + succinate(out) = glutarate(out) + succinate(in). Its function is as follows. Renal transmembrane organic anion/dicarboxylate exchanger that participates in the reabsorption of conjugated steroids, as well as bile acids, driven by an outward gradient of dicarboxylates such as glutarate or succinate. Transports androstanediol glucuronide (5alpha-androstane-3alpha,17beta-diol 3-O-(beta-D-glucuronate)), estrone 3-sulfate, and estradiol-17-glucuronide (17beta-estradiol 17-O-(beta-D-glucuronate)), and taurocholate. The sequence is that of Steroid transmembrane transporter SLC22A24 from Oryctolagus cuniculus (Rabbit).